Consider the following 224-residue polypeptide: EF-hand calcium-binding domain-containing protein 1 (224 aa).

Residues 1–21 form the signal peptide; sequence MKVSLLLLALVLVCLVQGSES. In terms of domain architecture, EF-hand spans 115 to 150; it reads IAHPDFMKAYSIADVDGDGELSPKEFYNGPYVFEMD. Residues Asp-128, Asp-130, Asp-132, Glu-134, and Glu-139 each coordinate Ca(2+).

In terms of tissue distribution, component of the acid-soluble organic matrix of calcified layers of the shell (at protein level).

The protein resides in the secreted. This Lottia gigantea (Giant owl limpet) protein is EF-hand calcium-binding domain-containing protein 1.